The sequence spans 151 residues: uncharacterized protein (151 aa).

A run of 3 helical transmembrane segments spans residues 12–32 (LAYF…LFII), 59–79 (LAFL…YGLL), and 114–134 (YFAY…IAFG).

The protein resides in the cell membrane. This is an uncharacterized protein from Bacillus subtilis (strain 168).